Consider the following 148-residue polypeptide: uncharacterized protein (148 aa).

Over residues 65–79 (VDSTPSVDSTGSTSD) the composition is skewed to low complexity. The disordered stretch occupies residues 65–85 (VDSTPSVDSTGSTSDVVDDRG).

This is an uncharacterized protein from Saccharomyces cerevisiae (strain ATCC 204508 / S288c) (Baker's yeast).